The following is a 204-amino-acid chain: Small ribosomal subunit protein eS8 (204 aa).

The protein belongs to the eukaryotic ribosomal protein eS8 family.

This is Small ribosomal subunit protein eS8 (RPS8) from Griffithsia japonica (Red alga).